The following is a 314-amino-acid chain: Ribosomal RNA small subunit methyltransferase H (314 aa).

S-adenosyl-L-methionine contacts are provided by residues 36–38, aspartate 56, phenylalanine 83, aspartate 104, and glutamine 111; that span reads GGH.

Belongs to the methyltransferase superfamily. RsmH family.

It is found in the cytoplasm. The enzyme catalyses cytidine(1402) in 16S rRNA + S-adenosyl-L-methionine = N(4)-methylcytidine(1402) in 16S rRNA + S-adenosyl-L-homocysteine + H(+). Its function is as follows. Specifically methylates the N4 position of cytidine in position 1402 (C1402) of 16S rRNA. This is Ribosomal RNA small subunit methyltransferase H from Syntrophotalea carbinolica (strain DSM 2380 / NBRC 103641 / GraBd1) (Pelobacter carbinolicus).